Reading from the N-terminus, the 87-residue chain is Small ribosomal subunit protein bS20 (87 aa).

The tract at residues 1–22 (MANHKSALKRHKQSLKRAARNR) is disordered.

Belongs to the bacterial ribosomal protein bS20 family.

Functionally, binds directly to 16S ribosomal RNA. This chain is Small ribosomal subunit protein bS20, found in Nitratidesulfovibrio vulgaris (strain DP4) (Desulfovibrio vulgaris).